A 373-amino-acid chain; its full sequence is Probable pectin lyase C (373 aa).

The N-terminal stretch at 1 to 18 (MKVPFLQLLCLNAALASA) is a signal peptide. Disulfide bonds link C81-C100 and C90-C220. Residue N123 is glycosylated (N-linked (GlcNAc...) asparagine). R250 is an active-site residue. A disulfide bridge links C316 with C324.

The protein belongs to the polysaccharide lyase 1 family.

It is found in the secreted. The catalysed reaction is Eliminative cleavage of (1-&gt;4)-alpha-D-galacturonan methyl ester to give oligosaccharides with 4-deoxy-6-O-methyl-alpha-D-galact-4-enuronosyl groups at their non-reducing ends.. Its function is as follows. Pectinolytic enzymes consist of four classes of enzymes: pectin lyase, polygalacturonase, pectin methylesterase and rhamnogalacturonase. Among pectinolytic enzymes, pectin lyase is the most important in depolymerization of pectin, since it cleaves internal glycosidic bonds of highly methylated pectins. The polypeptide is Probable pectin lyase C (pelC) (Aspergillus niger (strain ATCC MYA-4892 / CBS 513.88 / FGSC A1513)).